We begin with the raw amino-acid sequence, 180 residues long: Threonylcarbamoyl-AMP synthase (180 aa).

The region spanning 1–180 (MRARALQHFL…DLITGAIVRP (180 aa)) is the YrdC-like domain.

It belongs to the SUA5 family. TsaC subfamily.

Its subcellular location is the cytoplasm. The enzyme catalyses L-threonine + hydrogencarbonate + ATP = L-threonylcarbamoyladenylate + diphosphate + H2O. Functionally, required for the formation of a threonylcarbamoyl group on adenosine at position 37 (t(6)A37) in tRNAs that read codons beginning with adenine. Catalyzes the conversion of L-threonine, HCO(3)(-)/CO(2) and ATP to give threonylcarbamoyl-AMP (TC-AMP) as the acyladenylate intermediate, with the release of diphosphate. In Methylobacillus flagellatus (strain ATCC 51484 / DSM 6875 / VKM B-1610 / KT), this protein is Threonylcarbamoyl-AMP synthase.